We begin with the raw amino-acid sequence, 375 residues long: Alanine racemase, catabolic (375 aa).

Lys38 (proton acceptor; specific for D-alanine) is an active-site residue. An N6-(pyridoxal phosphate)lysine modification is found at Lys38. Tyr269 serves as the catalytic Proton acceptor; specific for L-alanine.

It belongs to the alanine racemase family. The cofactor is pyridoxal 5'-phosphate.

It catalyses the reaction L-alanine = D-alanine. It participates in amino-acid biosynthesis; D-alanine biosynthesis; D-alanine from L-alanine: step 1/1. In Schizosaccharomyces pombe (strain 972 / ATCC 24843) (Fission yeast), this protein is Alanine racemase, catabolic (alr1).